The following is a 491-amino-acid chain: Monothiol glutaredoxin-S11 (491 aa).

Glutaredoxin domains lie at 151–253, 287–389, and 394–491; these read NKRL…NIPL, KERL…GIVA, and EDRL…TLSE. Residue Lys-411 participates in glutathione binding. Cys-419 lines the [2Fe-2S] cluster pocket. Residues Arg-448, Phe-460, and 473–474 contribute to the glutathione site; that span reads CD.

The protein belongs to the glutaredoxin family. CGFS subfamily.

The protein resides in the cytoplasm. Functionally, may only reduce GSH-thiol disulfides, but not protein disulfides. This chain is Monothiol glutaredoxin-S11 (GRXS11), found in Oryza sativa subsp. japonica (Rice).